The chain runs to 203 residues: A-type ATP synthase subunit E (203 aa).

It belongs to the V-ATPase E subunit family. Has multiple subunits with at least A(3), B(3), C, D, E, F, H, I and proteolipid K(x).

It localises to the cell membrane. Functionally, component of the A-type ATP synthase that produces ATP from ADP in the presence of a proton gradient across the membrane. This Methanococcus maripaludis (strain DSM 14266 / JCM 13030 / NBRC 101832 / S2 / LL) protein is A-type ATP synthase subunit E.